The chain runs to 806 residues: WEB family protein At3g02930, chloroplastic (806 aa).

Residues 1 to 78 (MASKIKNGLS…PTPPEKTQIR (78 aa)) constitute a chloroplast transit peptide. 2 disordered regions span residues 1–94 (MASK…QIKE) and 380–403 (KSEQKLGIAEEESSKSEKEAEKLK). The span at 9–22 (LSDTTLRKSSSTSL) shows a compositional bias: low complexity. Over residues 34 to 59 (PDSNSPSPTQQQSRLSFERPSSNSKP) the composition is skewed to polar residues. 3 coiled-coil regions span residues 88–530 (QSVQ…FESA), 585–662 (DCLK…IEEN), and 698–757 (ETLD…EDLN). Residues 391–403 (ESSKSEKEAEKLK) show a composition bias toward basic and acidic residues. Disordered regions lie at residues 684–725 (ENGY…EDET) and 746–777 (KESAKEEEEDLNVVDQSQKTSPVNGLTGEDEL). 2 stretches are compositionally biased toward basic and acidic residues: residues 685–699 (NGYRSAEEKSSKVET) and 706–725 (KLEEDTEKKEKKERSPEDET). Over residues 759–769 (VDQSQKTSPVN) the composition is skewed to polar residues.

It belongs to the WEB family.

It localises to the plastid. Its subcellular location is the chloroplast. The chain is WEB family protein At3g02930, chloroplastic from Arabidopsis thaliana (Mouse-ear cress).